The following is a 471-amino-acid chain: Tryptophanase (471 aa).

N6-acetyllysine is present on residues K5, K115, and K156. An N6-(pyridoxal phosphate)lysine modification is found at K270. At K450 the chain carries N6-acetyllysine.

This sequence belongs to the beta-eliminating lyase family. Homotetramer. It depends on pyridoxal 5'-phosphate as a cofactor.

It carries out the reaction L-tryptophan + H2O = indole + pyruvate + NH4(+). It participates in amino-acid degradation; L-tryptophan degradation via pyruvate pathway; indole and pyruvate from L-tryptophan: step 1/1. In Shigella boydii serotype 18 (strain CDC 3083-94 / BS512), this protein is Tryptophanase.